A 179-amino-acid chain; its full sequence is Ribosome maturation factor RimM (179 aa).

Residues 100–176 form the PRC barrel domain; it reads KEEFHLLELI…FLIINPPNGL (77 aa).

The protein belongs to the RimM family. Binds ribosomal protein uS19.

The protein localises to the cytoplasm. In terms of biological role, an accessory protein needed during the final step in the assembly of 30S ribosomal subunit, possibly for assembly of the head region. Essential for efficient processing of 16S rRNA. May be needed both before and after RbfA during the maturation of 16S rRNA. It has affinity for free ribosomal 30S subunits but not for 70S ribosomes. The protein is Ribosome maturation factor RimM of Prochlorococcus marinus (strain MIT 9312).